The chain runs to 428 residues: Probable pectin lyase F (428 aa).

A signal peptide spans 1-20 (MVLLHPLLTAAALLGASARA). A disulfide bridge connects residues cysteine 83 and cysteine 107. Arginine 257 is an active-site residue. A glycan (N-linked (GlcNAc...) asparagine) is linked at asparagine 276. Cysteine 324 and cysteine 332 are joined by a disulfide. Residues 383 to 428 (GSGGSGAASSSVSITPSPTSSAIPSSSATPSSSAYARRHYARHHHY) are disordered. Positions 389-417 (AASSSVSITPSPTSSAIPSSSATPSSSAY) are enriched in low complexity. Positions 418–428 (ARRHYARHHHY) are enriched in basic residues.

This sequence belongs to the polysaccharide lyase 1 family.

Its subcellular location is the secreted. It catalyses the reaction Eliminative cleavage of (1-&gt;4)-alpha-D-galacturonan methyl ester to give oligosaccharides with 4-deoxy-6-O-methyl-alpha-D-galact-4-enuronosyl groups at their non-reducing ends.. Functionally, pectinolytic enzymes consist of four classes of enzymes: pectin lyase, polygalacturonase, pectin methylesterase and rhamnogalacturonase. Among pectinolytic enzymes, pectin lyase is the most important in depolymerization of pectin, since it cleaves internal glycosidic bonds of highly methylated pectins. The sequence is that of Probable pectin lyase F (pelF) from Aspergillus oryzae (strain ATCC 42149 / RIB 40) (Yellow koji mold).